We begin with the raw amino-acid sequence, 465 residues long: Asparagine--tRNA ligase (465 aa).

It belongs to the class-II aminoacyl-tRNA synthetase family. In terms of assembly, homodimer.

Its subcellular location is the cytoplasm. It carries out the reaction tRNA(Asn) + L-asparagine + ATP = L-asparaginyl-tRNA(Asn) + AMP + diphosphate + H(+). The chain is Asparagine--tRNA ligase from Hahella chejuensis (strain KCTC 2396).